The sequence spans 680 residues: Methionine--tRNA ligase (680 aa).

The short motif at 15 to 25 (PYANGPVHIGH) is the 'HIGH' region element. Zn(2+)-binding residues include Cys-147, Cys-150, Cys-160, and Cys-163. The short motif at 332 to 336 (KISTS) is the 'KMSKS' region element. Thr-335 is an ATP binding site. Positions 579-680 (DFLKLDIRVG…AEVAPGSQVK (102 aa)) constitute a tRNA-binding domain.

It belongs to the class-I aminoacyl-tRNA synthetase family. MetG type 1 subfamily. In terms of assembly, homodimer. Zn(2+) serves as cofactor.

Its subcellular location is the cytoplasm. It carries out the reaction tRNA(Met) + L-methionine + ATP = L-methionyl-tRNA(Met) + AMP + diphosphate. Its function is as follows. Is required not only for elongation of protein synthesis but also for the initiation of all mRNA translation through initiator tRNA(fMet) aminoacylation. The chain is Methionine--tRNA ligase from Porphyromonas gingivalis (strain ATCC 33277 / DSM 20709 / CIP 103683 / JCM 12257 / NCTC 11834 / 2561).